The sequence spans 24 residues: Pandinin-2 (24 aa).

Homooligomer. Expressed by the venom gland.

The protein resides in the secreted. The protein localises to the target cell membrane. Functionally, disrupts cell membranes through formation of pores. Has strong antimicrobial activity against Gram-positive bacteria B.subtilis, S.epidermidis, E.faecalis and S.aureus. Is less active against Gram-negative bacteria P.aeruginosa and E.coli. Also increases efficacy of antibiotics (ampicillin, chloramphenicol, streptomycin, kanamycin, novobiocin) when tested against E.coli, probably by facilitating their incorporation into the bacteria. Possesses antifungal activity against C.albicans and hemolytic activity against human, sheep and pig erythrocytes. The sequence is that of Pandinin-2 from Pandinus imperator (Emperor scorpion).